A 482-amino-acid chain; its full sequence is Cysteine--tRNA ligase (482 aa).

Residue C28 participates in Zn(2+) binding. The short motif at 30–40 (PTVYNFLHVGN) is the 'HIGH' region element. Positions 208, 233, and 237 each coordinate Zn(2+). A 'KMSKS' region motif is present at residues 265–269 (KMSKS). Position 268 (K268) interacts with ATP.

Belongs to the class-I aminoacyl-tRNA synthetase family. Monomer. Zn(2+) serves as cofactor.

It localises to the cytoplasm. The enzyme catalyses tRNA(Cys) + L-cysteine + ATP = L-cysteinyl-tRNA(Cys) + AMP + diphosphate. The chain is Cysteine--tRNA ligase from Bdellovibrio bacteriovorus (strain ATCC 15356 / DSM 50701 / NCIMB 9529 / HD100).